The sequence spans 676 residues: DNA ligase (676 aa).

The span at 1 to 10 shows a compositional bias: basic and acidic residues; the sequence is MTQAHHDDAG. The tract at residues 1–23 is disordered; sequence MTQAHHDDAGARNALQGGLATDP. NAD(+) is bound by residues 52–56 and 95–96; these read DAAFD and SL. Residue Lys-148 is the N6-AMP-lysine intermediate of the active site. NAD(+) is bound by residues Arg-169, Glu-203, and Lys-330. Residues Cys-420, Cys-423, Cys-436, and Cys-441 each coordinate Zn(2+). The BRCT domain maps to 593–676; the sequence is EAEGPLAGLT…DKLIAERRGG (84 aa).

Belongs to the NAD-dependent DNA ligase family. LigA subfamily. Mg(2+) is required as a cofactor. Requires Mn(2+) as cofactor.

The enzyme catalyses NAD(+) + (deoxyribonucleotide)n-3'-hydroxyl + 5'-phospho-(deoxyribonucleotide)m = (deoxyribonucleotide)n+m + AMP + beta-nicotinamide D-nucleotide.. Functionally, DNA ligase that catalyzes the formation of phosphodiester linkages between 5'-phosphoryl and 3'-hydroxyl groups in double-stranded DNA using NAD as a coenzyme and as the energy source for the reaction. It is essential for DNA replication and repair of damaged DNA. The sequence is that of DNA ligase from Sorangium cellulosum (strain So ce56) (Polyangium cellulosum (strain So ce56)).